Reading from the N-terminus, the 258-residue chain is uncharacterized protein (258 aa).

An N-terminal signal peptide occupies residues 1–23 (MVWCHYILLVLTFFLFTTFFTAA). At 24 to 64 (CPAIFTWLNSLFRLSNDSPHVVHTSIAEVGDIEDGRVDKDG) the chain is on the cytoplasmic side. Residues 65 to 85 (VLFVDLEFFLGCLPFFFFALV) traverse the membrane as a helical segment. Topologically, residues 86–123 (DQSSSSSVCKPLSPSDAKRSSNSLLRLSLVSSNDSDSS) are extracellular. N-linked (GlcNAc...) asparagine glycosylation is present at Asn-118. A helical membrane pass occupies residues 124-144 (VSVSTFAFFFFFLFFLFFVFT). The Cytoplasmic portion of the chain corresponds to 145–230 (CTFSSELTSS…SSSISFRISS (86 aa)). Residues 231–251 (IFFLCSLVFMWFFNCFSDLNV) form a helical membrane-spanning segment. Over 252 to 258 (LLQIKHS) the chain is Extracellular.

It localises to the membrane. This is an uncharacterized protein from Saccharomyces cerevisiae (strain ATCC 204508 / S288c) (Baker's yeast).